Here is a 397-residue protein sequence, read N- to C-terminus: Beta sliding clamp (397 aa).

This sequence belongs to the beta sliding clamp family. As to quaternary structure, forms a ring-shaped head-to-tail homodimer around DNA which binds and tethers DNA polymerases and other proteins to the DNA. The DNA replisome complex has a single clamp-loading complex (3 tau and 1 each of delta, delta', psi and chi subunits) which binds 3 Pol III cores (1 core on the leading strand and 2 on the lagging strand) each with a beta sliding clamp dimer. Additional proteins in the replisome are other copies of gamma, psi and chi, Ssb, DNA helicase and RNA primase.

The protein resides in the cytoplasm. Confers DNA tethering and processivity to DNA polymerases and other proteins. Acts as a clamp, forming a ring around DNA (a reaction catalyzed by the clamp-loading complex) which diffuses in an ATP-independent manner freely and bidirectionally along dsDNA. Initially characterized for its ability to contact the catalytic subunit of DNA polymerase III (Pol III), a complex, multichain enzyme responsible for most of the replicative synthesis in bacteria; Pol III exhibits 3'-5' exonuclease proofreading activity. The beta chain is required for initiation of replication as well as for processivity of DNA replication. The polypeptide is Beta sliding clamp (dnaN) (Mycolicibacterium smegmatis (strain ATCC 700084 / mc(2)155) (Mycobacterium smegmatis)).